A 378-amino-acid polypeptide reads, in one-letter code: AA13 family lytic polysaccharide monooxygenase A (378 aa).

A signal peptide spans 1–17 (MKWSVIQALALASGVQA). Residue H18 coordinates Cu(2+). The residue at position 18 (H18) is a Methylhistidine. A Chitin-binding type-4 domain is found at 18–244 (HGYLTFPMSR…PQIYLTCADI (227 aa)). Intrachain disulfides connect C39/C42, C65/C241, C101/C199, C117/C144, C152/C160, C166/C172, and C180/C188. Cu(2+) is bound at residue H108. N221 carries an N-linked (GlcNAc...) asparagine glycan. Residue Y238 participates in Cu(2+) binding. A compositionally biased stretch (low complexity) spans 250-263 (DSQSPPTTTTTSTP). Residues 250 to 272 (DSQSPPTTTTTSTPASPPPTSCA) are disordered. The CBM20 domain occupies 272-378 (ATPAASVAVT…GTATVDTAWK (107 aa)).

It belongs to the polysaccharide monooxygenase AA13 family. The cofactor is Cu(2+). Post-translationally, O-mannosylated.

The protein resides in the secreted. It catalyses the reaction starch + reduced acceptor + O2 = D-glucono-1,5-lactone-terminated malto-oligosaccharides + short-chain malto-oligosaccharides + acceptor + H2O.. Activity is inhibited by both beta-cyclodextrin or amylose that block the access to the active site. In terms of biological role, starch-active lytic polysaccharide monooxygenase that oxidizes the C1 position of starch substrates. Catalysis by LPMOs requires the reduction of the active-site copper from Cu(II) to Cu(I) by a reducing agent and H(2)O(2) or O(2) as a cosubstrate. The polypeptide is AA13 family lytic polysaccharide monooxygenase A (Pyricularia oryzae (strain 70-15 / ATCC MYA-4617 / FGSC 8958) (Rice blast fungus)).